Consider the following 630-residue polypeptide: Chaperone protein HtpG (630 aa).

The tract at residues 1–338 (MTVEANKETL…SNDLSLNVSR (338 aa)) is a; substrate-binding. The segment at 339–555 (EILQNDSTVE…QFDMGAQMKK (217 aa)) is b. The interval 556 to 630 (IMEAAGQKVP…LNRLLLELAN (75 aa)) is c.

This sequence belongs to the heat shock protein 90 family. In terms of assembly, homodimer.

It is found in the cytoplasm. Molecular chaperone. Has ATPase activity. The protein is Chaperone protein HtpG of Marinobacter nauticus (strain ATCC 700491 / DSM 11845 / VT8) (Marinobacter aquaeolei).